We begin with the raw amino-acid sequence, 277 residues long: Large ribosomal subunit protein uL2c (277 aa).

Disordered stretches follow at residues 36 to 56 and 225 to 259; these read NKHS…HRGG and MNSV…GSKS.

It belongs to the universal ribosomal protein uL2 family. In terms of assembly, part of the 50S ribosomal subunit.

It is found in the plastid. It localises to the chloroplast. This Psilotum nudum (Whisk fern) protein is Large ribosomal subunit protein uL2c (rpl2).